A 209-amino-acid polypeptide reads, in one-letter code: Cyclin-dependent kinase inhibitor 2 (209 aa).

The required for nuclear localization stretch occupies residues 1–32 (MAAVRRRERDVVEENGVTTTTVKRRKMEEEVD).

This sequence belongs to the CDI family. ICK/KRP subfamily. Specifically interacts with CDKA-1, but not with CDKB1-1. In terms of processing, phosphorylated.

Its subcellular location is the nucleus. The protein resides in the nucleoplasm. Functionally, binds and inhibits CYCD2-1/CDKA-1 complex kinase activity. Regulates cell division which is crucial for plant growth, development and morphogenesis. May regulate early lateral root initiation by blocking the G1/S phase transition. Controls the mitosis-to-endocycle transition and the onset of the endoreduplication cycle during leaf development through inhibition of mitotic CDKA-1 kinase complexes. Specifically targets CDKA-1. This is Cyclin-dependent kinase inhibitor 2 (KRP2) from Arabidopsis thaliana (Mouse-ear cress).